A 1580-amino-acid polypeptide reads, in one-letter code: Transcriptional activator GLI3 (1580 aa).

The residue at position 1 (methionine 1) is an N-acetylmethionine. Composition is skewed to polar residues over residues 1–10 and 58–78; these read MEAQSHSSTT and ITMQ…PSTS. The tract at residues 1-79 is disordered; it reads MEAQSHSSTT…KVSEEPSTSS (79 aa). Omega-N-methylarginine is present on arginine 175. The disordered stretch occupies residues 368–475; it reads QSLGSAFGHS…DKDESKQEPE (108 aa). Residues 401–427 are compositionally biased toward polar residues; sequence NPVQVSSGPSESSQNKPTSESAVSSTG. Residues lysine 438 and lysine 462 each participate in a glycyl lysine isopeptide (Lys-Gly) (interchain with G-Cter in SUMO2) cross-link. Basic and acidic residues predominate over residues 461 to 474; sequence VKEEGDKDESKQEP. 5 consecutive C2H2-type zinc fingers follow at residues 480–505, 513–540, 546–570, 576–601, and 607–632; these read TNCH…NNDH, FVCR…MRRH, HKCT…LRSH, YVCE…NRTH, and YVCK…KTVH. The segment at 620–728 is disordered; it reads DPSSLRKHVK…PISNYSNSGL (109 aa). Positions 632-648 are enriched in basic and acidic residues; the sequence is HGPEAHVTKKQRGDIHP. The residue at position 664 (serine 664) is a Phosphoserine. Residues 684–699 show a composition bias toward basic and acidic residues; it reads SKREECLQVKTVKAEK. The segment covering 703–726 has biased composition (low complexity); that stretch reads SQPSPGGQSSCSSQQSPISNYSNS. The tract at residues 745–845 is mediates interaction with DZIP1; the sequence is DETPIMDSTI…VDVTMLNMLN (101 aa). Residue lysine 773 forms a Glycyl lysine isopeptide (Lys-Gly) (interchain with G-Cter in ubiquitin) linkage. Lysine 779 participates in a covalent cross-link: Glycyl lysine isopeptide (Lys-Gly) (interchain with G-Cter in SUMO2); alternate. A Glycyl lysine isopeptide (Lys-Gly) (interchain with G-Cter in ubiquitin); alternate cross-link involves residue lysine 779. Glycyl lysine isopeptide (Lys-Gly) (interchain with G-Cter in ubiquitin) cross-links involve residues lysine 784 and lysine 800. Serine 849, serine 865, serine 877, and serine 907 each carry phosphoserine; by PKA. The segment covering 863–882 has biased composition (low complexity); it reads RSSGISPCFSSRRSSEASQA. A disordered region spans residues 863-918; sequence RSSGISPCFSSRRSSEASQAEGRPQNVSVADSYDPISTDASRRSSEASQSDGLPSL. A compositionally biased stretch (polar residues) spans 908–918; the sequence is EASQSDGLPSL. A phosphoserine; by PKA mark is found at serine 980 and serine 1006. The disordered stretch occupies residues 981–1042; sequence DGGAHGYGRR…PAMATSAEKR (62 aa).

This sequence belongs to the GLI C2H2-type zinc-finger protein family. In terms of assembly, the full-length GLI3 form (GLI3FL) interacts with SUFU and this interaction regulates the formation of either repressor or activator forms of GLI3. Its association with SUFU is regulated by Hh signaling and dissociation of the SUFU-GLI3 interaction requires the presence of the ciliary motor KIF3A. Interacts with KIF7. The activator form of GLI3 (GLI3A) but not the repressor form (GLI3R) can interact with TRPS1. The phosphorylated form interacts with BTRC. Interacts with ZIC1. Interacts with ZIC3 (via C2H2-type domains 3, 4 and 5); the interaction enhances its transcriptional activity. Interacts with WRD11; the interaction associates EMX1 with GLI3. Interacts with DZIP1; retains GLI3 within the cytoplasm. Phosphorylated on multiple sites by protein kinase A (PKA) and phosphorylation by PKA primes further phosphorylation by CK1 and GSK3. Phosphorylated by DYRK2 (in vitro). Phosphorylation is essential for its proteolytic processing. In terms of processing, transcriptional repressor GLI3R, a C-terminally truncated form, is generated from the full-length GLI3 protein (GLI3FL/GLI3-190) through proteolytic processing. This process requires PKA-primed phosphorylation of GLI3, ubiquitination of GLI3 and the presence of BTRC. GLI3FL is complexed with SUFU in the cytoplasm and is maintained in a neutral state. Without the Hh signal, the SUFU-GLI3 complex is recruited to cilia, leading to the efficient processing of GLI3FL into GLI3R. GLI3R formation leads to its dissociation from SUFU, allowing it to translocate into the nucleus, and repress Hh target genes. When Hh signaling is initiated, SUFU dissociates from GLI3FL and this has two consequences. First, GLI3R production is halted. Second, free GLI3FL translocates to the nucleus, where it is phosphorylated, destabilized, and converted to a transcriptional activator (GLI3A). Phosphorylated in vitro by ULK3.

It is found in the nucleus. Its subcellular location is the cytoplasm. The protein localises to the cell projection. It localises to the cilium. Has a dual function as a transcriptional activator and a repressor of the sonic hedgehog (Shh) pathway, and plays a role in limb development. The full-length GLI3 form (GLI3FL) after phosphorylation and nuclear translocation, acts as an activator (GLI3A) while GLI3R, its C-terminally truncated form, acts as a repressor. A proper balance between the GLI3 activator and the repressor GLI3R, rather than the repressor gradient itself or the activator/repressor ratio gradient, specifies limb digit number and identity. In concert with TRPS1, plays a role in regulating the size of the zone of distal chondrocytes, in restricting the zone of PTHLH expression in distal cells and in activating chondrocyte proliferation. Binds to the minimal GLI-consensus sequence 5'-GGGTGGTC-3'. Plays a role in limb and brain development. The polypeptide is Transcriptional activator GLI3 (GLI3) (Pan troglodytes (Chimpanzee)).